Consider the following 77-residue polypeptide: Small ribosomal subunit protein bS21 (77 aa).

This sequence belongs to the bacterial ribosomal protein bS21 family.

This is Small ribosomal subunit protein bS21 from Methylococcus capsulatus (strain ATCC 33009 / NCIMB 11132 / Bath).